Reading from the N-terminus, the 358-residue chain is Ion-translocating oxidoreductase complex subunit D (358 aa).

Transmembrane regions (helical) follow at residues 19–39 (IMLWVILAMMPAFFTQIYYFG), 41–61 (GVLLQSALAIGTAIIAEFIAI), 79–99 (LTALILAMAIPPYAPYWVIII), and 125–145 (IGYVILLISFPLQMTTWMPPI). Thr-186 is modified (FMN phosphoryl threonine). The next 5 helical transmembrane spans lie at 220 to 240 (FAQGWWQINVAFLAGGIFLIL), 248 to 268 (IPVAMLVTFFCLATATAFTGF), 271 to 291 (LSAISQLVSGAMMFGAFFIAT), 297 to 317 (SITPRGKIIFGALVGLFVYLI), and 321 to 341 (GNYPDGVAFAILLSNICVPLI).

It belongs to the NqrB/RnfD family. The complex is composed of six subunits: RnfA, RnfB, RnfC, RnfD, RnfE and RnfG. The cofactor is FMN.

It localises to the cell inner membrane. In terms of biological role, part of a membrane-bound complex that couples electron transfer with translocation of ions across the membrane. This Haemophilus influenzae (strain PittEE) protein is Ion-translocating oxidoreductase complex subunit D.